The chain runs to 269 residues: Aminodeoxychorismate lyase (269 aa).

An N6-(pyridoxal phosphate)lysine modification is found at Lys-140.

It belongs to the class-IV pyridoxal-phosphate-dependent aminotransferase family. Homodimer. The cofactor is pyridoxal 5'-phosphate.

It carries out the reaction 4-amino-4-deoxychorismate = 4-aminobenzoate + pyruvate + H(+). Its pathway is cofactor biosynthesis; tetrahydrofolate biosynthesis; 4-aminobenzoate from chorismate: step 2/2. Functionally, involved in the biosynthesis of p-aminobenzoate (PABA), a precursor of tetrahydrofolate. Converts 4-amino-4-deoxychorismate into 4-aminobenzoate (PABA) and pyruvate. The protein is Aminodeoxychorismate lyase (pabC) of Escherichia coli (strain K12).